We begin with the raw amino-acid sequence, 282 residues long: Pantothenate synthetase (282 aa).

Position 26–33 (26–33) interacts with ATP; that stretch reads MGNLHEGH. The active-site Proton donor is the H33. Residue Q57 coordinates (R)-pantoate. Q57 contributes to the beta-alanine binding site. 144 to 147 serves as a coordination point for ATP; it reads GKKD. Q150 is a (R)-pantoate binding site. ATP contacts are provided by residues V173 and 181-184; that span reads LSSR.

It belongs to the pantothenate synthetase family. Homodimer.

It localises to the cytoplasm. The enzyme catalyses (R)-pantoate + beta-alanine + ATP = (R)-pantothenate + AMP + diphosphate + H(+). Its pathway is cofactor biosynthesis; (R)-pantothenate biosynthesis; (R)-pantothenate from (R)-pantoate and beta-alanine: step 1/1. In terms of biological role, catalyzes the condensation of pantoate with beta-alanine in an ATP-dependent reaction via a pantoyl-adenylate intermediate. The sequence is that of Pantothenate synthetase from Cupriavidus taiwanensis (strain DSM 17343 / BCRC 17206 / CCUG 44338 / CIP 107171 / LMG 19424 / R1) (Ralstonia taiwanensis (strain LMG 19424)).